Here is a 416-residue protein sequence, read N- to C-terminus: Putative L-glutamine:3-amino-2,3-dideoxy-scyllo-inosose aminotransferase (416 aa).

N6-(pyridoxal phosphate)lysine is present on K199.

Belongs to the DegT/DnrJ/EryC1 family. L-glutamine:2-deoxy-scyllo-inosose/scyllo-inosose aminotransferase subfamily. It depends on pyridoxal 5'-phosphate as a cofactor.

The catalysed reaction is 3-amino-2,3-dideoxy-scyllo-inosose + L-glutamine = 2-deoxystreptamine + 2-oxoglutaramate. It functions in the pathway metabolic intermediate biosynthesis; 2-deoxystreptamine biosynthesis; 2-deoxystreptamine from D-glucose 6-phosphate: step 4/4. Its pathway is antibiotic biosynthesis; tobramycin biosynthesis. Functionally, catalyzes the transamination of 3-amino-2,3-dideoxy-scyllo-inosose (amino-DOI) into 2-deoxystreptamine (DOS). In Streptoalloteichus tenebrarius (strain ATCC 17920 / DSM 40477 / JCM 4838 / CBS 697.72 / NBRC 16177 / NCIMB 11028 / NRRL B-12390 / A12253. 1 / ISP 5477) (Streptomyces tenebrarius), this protein is Putative L-glutamine:3-amino-2,3-dideoxy-scyllo-inosose aminotransferase (tobS2).